Here is a 323-residue protein sequence, read N- to C-terminus: Ferrochelatase (323 aa).

Residues His195 and Glu276 each contribute to the Fe cation site.

It belongs to the ferrochelatase family.

It localises to the cytoplasm. It catalyses the reaction heme b + 2 H(+) = protoporphyrin IX + Fe(2+). The protein operates within porphyrin-containing compound metabolism; protoheme biosynthesis; protoheme from protoporphyrin-IX: step 1/1. Functionally, catalyzes the ferrous insertion into protoporphyrin IX. The protein is Ferrochelatase of Mannheimia succiniciproducens (strain KCTC 0769BP / MBEL55E).